A 334-amino-acid chain; its full sequence is MAFNMKNRHLLSLVHHTEREIKYLLDLSRDLKRAKYAGTEQQKLKGKNIALIFEKTSTRTRCAFEVAAYDQGAQVTYIDPNSSQIGHKESMKDTARVLGRMYDGIEYRGFKQSIVQELADYAGVPVFNGLTDEFHPTQMLADVLTMIEHCDKPLSEISYVYIGDARNNMGNSLLLIGAKLGMDVRICAPKALLPEASLVEMCEKFAKESGARITVTEDIDKAVKGVDFVHTDVWVSMGEPLETWGERIKLLLPYQVTPELMKRTGNPKVKFMHCLPAFHNSETKVGRQIAEKYPELANGIEVTEEVFESPMNIAFEQAENRMHTIKAVMVASLA.

Residues 57–60 (STRT), Gln-84, Arg-108, and 135–138 (HPTQ) contribute to the carbamoyl phosphate site. Residues Asn-168, Asp-232, and 236–237 (SM) each bind L-ornithine. Carbamoyl phosphate is bound by residues 274 to 275 (CL) and Arg-321.

This sequence belongs to the aspartate/ornithine carbamoyltransferase superfamily. OTCase family.

The protein localises to the cytoplasm. The catalysed reaction is carbamoyl phosphate + L-ornithine = L-citrulline + phosphate + H(+). It functions in the pathway amino-acid degradation; L-arginine degradation via ADI pathway; carbamoyl phosphate from L-arginine: step 2/2. In terms of biological role, reversibly catalyzes the transfer of the carbamoyl group from carbamoyl phosphate (CP) to the N(epsilon) atom of ornithine (ORN) to produce L-citrulline. This is Ornithine carbamoyltransferase from Haemophilus influenzae (strain PittGG).